Consider the following 345-residue polypeptide: Beta-hexosaminidase (345 aa).

Residues aspartate 60, arginine 68, arginine 132, and 162-163 (KH) contribute to the substrate site. Histidine 175 serves as the catalytic Proton donor/acceptor. Aspartate 247 acts as the Nucleophile in catalysis.

This sequence belongs to the glycosyl hydrolase 3 family. NagZ subfamily.

The protein resides in the cytoplasm. It carries out the reaction Hydrolysis of terminal non-reducing N-acetyl-D-hexosamine residues in N-acetyl-beta-D-hexosaminides.. It participates in cell wall biogenesis; peptidoglycan recycling. Plays a role in peptidoglycan recycling by cleaving the terminal beta-1,4-linked N-acetylglucosamine (GlcNAc) from peptide-linked peptidoglycan fragments, giving rise to free GlcNAc, anhydro-N-acetylmuramic acid and anhydro-N-acetylmuramic acid-linked peptides. The polypeptide is Beta-hexosaminidase (Actinobacillus pleuropneumoniae serotype 3 (strain JL03)).